The primary structure comprises 314 residues: tRNA dimethylallyltransferase (314 aa).

12–19 (GPTGTGKS) serves as a coordination point for ATP. Residue 14–19 (TGTGKS) participates in substrate binding.

The protein belongs to the IPP transferase family. Monomer. Mg(2+) serves as cofactor.

The catalysed reaction is adenosine(37) in tRNA + dimethylallyl diphosphate = N(6)-dimethylallyladenosine(37) in tRNA + diphosphate. In terms of biological role, catalyzes the transfer of a dimethylallyl group onto the adenine at position 37 in tRNAs that read codons beginning with uridine, leading to the formation of N6-(dimethylallyl)adenosine (i(6)A). The chain is tRNA dimethylallyltransferase from Mycolicibacterium paratuberculosis (strain ATCC BAA-968 / K-10) (Mycobacterium paratuberculosis).